The sequence spans 162 residues: 2-C-methyl-D-erythritol 2,4-cyclodiphosphate synthase (162 aa).

A divalent metal cation contacts are provided by Asp9 and His11. Residues 9-11 and 35-36 each bind 4-CDP-2-C-methyl-D-erythritol 2-phosphate; these read DVH and HS. Residue His43 participates in a divalent metal cation binding. 4-CDP-2-C-methyl-D-erythritol 2-phosphate contacts are provided by residues 57–59, 62–66, 133–136, Phe140, and Arg143; these read DIG, FPDTD, and TTTE.

It belongs to the IspF family. As to quaternary structure, homotrimer. The cofactor is a divalent metal cation.

It catalyses the reaction 4-CDP-2-C-methyl-D-erythritol 2-phosphate = 2-C-methyl-D-erythritol 2,4-cyclic diphosphate + CMP. It participates in isoprenoid biosynthesis; isopentenyl diphosphate biosynthesis via DXP pathway; isopentenyl diphosphate from 1-deoxy-D-xylulose 5-phosphate: step 4/6. Functionally, involved in the biosynthesis of isopentenyl diphosphate (IPP) and dimethylallyl diphosphate (DMAPP), two major building blocks of isoprenoid compounds. Catalyzes the conversion of 4-diphosphocytidyl-2-C-methyl-D-erythritol 2-phosphate (CDP-ME2P) to 2-C-methyl-D-erythritol 2,4-cyclodiphosphate (ME-CPP) with a corresponding release of cytidine 5-monophosphate (CMP). The chain is 2-C-methyl-D-erythritol 2,4-cyclodiphosphate synthase from Histophilus somni (strain 129Pt) (Haemophilus somnus).